A 161-amino-acid polypeptide reads, in one-letter code: Putative pre-16S rRNA nuclease (161 aa).

This sequence belongs to the YqgF nuclease family.

It localises to the cytoplasm. Functionally, could be a nuclease involved in processing of the 5'-end of pre-16S rRNA. This Bartonella bacilliformis (strain ATCC 35685 / KC583 / Herrer 020/F12,63) protein is Putative pre-16S rRNA nuclease.